A 120-amino-acid chain; its full sequence is Large ribosomal subunit protein bL19 (120 aa).

The protein belongs to the bacterial ribosomal protein bL19 family.

This protein is located at the 30S-50S ribosomal subunit interface and may play a role in the structure and function of the aminoacyl-tRNA binding site. The sequence is that of Large ribosomal subunit protein bL19 from Kocuria rhizophila (strain ATCC 9341 / DSM 348 / NBRC 103217 / DC2201).